We begin with the raw amino-acid sequence, 103 residues long: N(4)-acetylcytidine amidohydrolase (103 aa).

One can recognise an ASCH domain in the interval 6 to 101 (ITFFQRFQDD…QTQFYVIEFK (96 aa)). K21 acts as the Proton acceptor in catalysis. The active-site Nucleophile is the T24. The Proton donor role is filled by E74.

The protein belongs to the N(4)-acetylcytidine amidohydrolase family.

It carries out the reaction N(4)-acetylcytidine + H2O = cytidine + acetate + H(+). The enzyme catalyses N(4)-acetyl-2'-deoxycytidine + H2O = 2'-deoxycytidine + acetate + H(+). It catalyses the reaction N(4)-acetylcytosine + H2O = cytosine + acetate + H(+). In terms of biological role, catalyzes the hydrolysis of N(4)-acetylcytidine (ac4C). The protein is N(4)-acetylcytidine amidohydrolase (yqfB) of Escherichia coli O81 (strain ED1a).